The following is a 245-amino-acid chain: Aliphatic sulfonates import ATP-binding protein SsuB (245 aa).

The ABC transporter domain occupies 6-225; that stretch reads VTVRGLRRAF…SRGDEGFDDL (220 aa). 38 to 45 lines the ATP pocket; that stretch reads GLSGSGKS.

The protein belongs to the ABC transporter superfamily. Aliphatic sulfonates importer (TC 3.A.1.17.2) family. As to quaternary structure, the complex is composed of two ATP-binding proteins (SsuB), two transmembrane proteins (SsuC) and a solute-binding protein (SsuA).

It is found in the cell membrane. It catalyses the reaction ATP + H2O + aliphatic sulfonate-[sulfonate-binding protein]Side 1 = ADP + phosphate + aliphatic sulfonateSide 2 + [sulfonate-binding protein]Side 1.. Its function is as follows. Part of the ABC transporter complex SsuABC involved in aliphatic sulfonates import. Responsible for energy coupling to the transport system. This Mycobacterium sp. (strain MCS) protein is Aliphatic sulfonates import ATP-binding protein SsuB.